The primary structure comprises 381 residues: Cobalt-precorrin-5B C(1)-methyltransferase (381 aa).

Belongs to the CbiD family.

It carries out the reaction Co-precorrin-5B + S-adenosyl-L-methionine = Co-precorrin-6A + S-adenosyl-L-homocysteine. The protein operates within cofactor biosynthesis; adenosylcobalamin biosynthesis; cob(II)yrinate a,c-diamide from sirohydrochlorin (anaerobic route): step 6/10. Functionally, catalyzes the methylation of C-1 in cobalt-precorrin-5B to form cobalt-precorrin-6A. The protein is Cobalt-precorrin-5B C(1)-methyltransferase of Methylococcus capsulatus (strain ATCC 33009 / NCIMB 11132 / Bath).